We begin with the raw amino-acid sequence, 398 residues long: Acetyl-CoA acetyltransferase (398 aa).

S2 carries the post-translational modification N-acetylserine. C91 acts as the Acyl-thioester intermediate in catalysis. Residues Y186 and K231 each coordinate CoA. Y186 is a binding site for K(+). K(+) contacts are provided by A248, A249, and A251. S252 is a CoA binding site. Residue V350 participates in K(+) binding. Residues H354 and C384 each act as proton acceptor in the active site.

It belongs to the thiolase-like superfamily. Thiolase family. Homotetramer.

Its subcellular location is the cytoplasm. It is found in the cytosol. It catalyses the reaction 2 acetyl-CoA = acetoacetyl-CoA + CoA. Its pathway is metabolic intermediate biosynthesis; (R)-mevalonate biosynthesis; (R)-mevalonate from acetyl-CoA: step 1/3. Acetyl-CoA acetyltransferase; part of the first module of ergosterol biosynthesis pathway that includes the early steps of the pathway, conserved across all eukaryotes, and which results in the formation of mevalonate from acetyl-coenzyme A (acetyl-CoA). ERG10 catalyzes the formation of acetoacetyl-CoA from acetyl-CoA. The first module starts with the action of the cytosolic acetyl-CoA acetyltransferase ERG10 that catalyzes the formation of acetoacetyl-CoA. The hydroxymethylglutaryl-CoA synthase ERG13 then condenses acetyl-CoA with acetoacetyl-CoA to form HMG-CoA. The rate-limiting step of the early module is the reduction to mevalonate by the 3-hydroxy-3-methylglutaryl-coenzyme A (HMG-CoA) reductases HMG1 and HMG2 which are derived from a single ancestral HMGR gene by gene duplication. The polypeptide is Acetyl-CoA acetyltransferase (Saccharomyces cerevisiae (strain ATCC 204508 / S288c) (Baker's yeast)).